Here is a 216-residue protein sequence, read N- to C-terminus: Superoxide dismutase [Cu-Zn] 2, chloroplastic (216 aa).

The transit peptide at 1–62 directs the protein to the chloroplast; it reads MAATNTILAF…APSKALTVVS (62 aa). The Cu cation site is built by His108, His110, and His125. A disulfide bridge links Cys119 with Cys208. His125, His133, His142, and Asp145 together coordinate Zn(2+). A Cu cation-binding site is contributed by His182.

It belongs to the Cu-Zn superoxide dismutase family. In terms of assembly, homotetramer. Requires Cu cation as cofactor. Zn(2+) serves as cofactor. As to expression, expressed in leaves (at protein level). The spatial localization is regulated by miR398-mediated silencing. Mostly present in flowers, old rosette leaves and inflorescence, and, to a lower extent, in cauline leaves, stems and roots.

Its subcellular location is the plastid. The protein resides in the chloroplast. It carries out the reaction 2 superoxide + 2 H(+) = H2O2 + O2. Its function is as follows. Destroys radicals which are normally produced within the cells and which are toxic to biological systems. Mediates tolerance to stress, including photo-oxidative stress. This is Superoxide dismutase [Cu-Zn] 2, chloroplastic (CSD2) from Arabidopsis thaliana (Mouse-ear cress).